A 100-amino-acid polypeptide reads, in one-letter code: Urease subunit gamma (100 aa).

Belongs to the urease gamma subunit family. As to quaternary structure, heterotrimer of UreA (gamma), UreB (beta) and UreC (alpha) subunits. Three heterotrimers associate to form the active enzyme.

The protein resides in the cytoplasm. It catalyses the reaction urea + 2 H2O + H(+) = hydrogencarbonate + 2 NH4(+). It participates in nitrogen metabolism; urea degradation; CO(2) and NH(3) from urea (urease route): step 1/1. In Pseudomonas aeruginosa (strain LESB58), this protein is Urease subunit gamma.